Consider the following 374-residue polypeptide: Speckle-type POZ protein (374 aa).

In terms of domain architecture, MATH spans 31-161; it reads KFSYMWTINN…DDKLTLFCEV (131 aa). Residues 71–191 form a required for nuclear localization region; the sequence is VNPKGLDEES…PDCRLADELG (121 aa). In terms of domain architecture, BTB spans 173-297; sequence QNTMNMVKVP…MCEDALCTSL (125 aa). The homodimerization stretch occupies residues 297–355; sequence LSVENAAEILILADLHSADQLKTQAVDFINYHASDVMETSGWKSMVASHPHLVAEAYRS.

Belongs to the Tdpoz family. As to quaternary structure, homodimer. Part of cullin-RING-based BCR (BTB-CUL3-RBX1) E3 ubiquitin-protein ligase complexes that contain CUL3 and SPOP, plus a target protein.

Its subcellular location is the nucleus. It is found in the nucleus speckle. It participates in protein modification; protein ubiquitination. Its function is as follows. Component of a cullin-RING-based BCR (BTB-CUL3-RBX1) E3 ubiquitin-protein ligase complex that mediates the ubiquitination of target proteins, leading most often to their proteasomal degradation. In Danio rerio (Zebrafish), this protein is Speckle-type POZ protein (spop).